Reading from the N-terminus, the 510-residue chain is MLRICVKRPCIKIVLSQVRPALLVRKENLHISTGVKVEKSSIINQKDPNKVRVEINELKRQAEIEKAAIKELEKNPQYQKLAEAFNSHDHVHLRESETEQNDIISLGTIRDYKSSKCEQADKPSSLNLHSHTHSHGHTHSHAAHNPLLVLSTEQIRKNAGVRITWVGLGVNVGIAIGKFFGGIVFHSQALFADAIHAISDMVSDLLTLLSVGLAANKPTADYPYGYGKIETVGSLAVSTILAMAGISIGWSSLCALVGPVIPHTIIDTIGNLGHAHTYSEDIIEDVTDINAAWIAAASIAAKEWIFRATRKIAINTNSNVLMANAWHHRVDSLTSLVALVAISTGYLVNIQSLDTIGGLIVSGLIIKAGGEGMCIAIKELIDQSVSRDDPRYLEIETLVKDTLNKLISNNNSQKPYGLKELTLLSSGPNLRGHLTLEVPLQKWGNILGVNEFEIVTHHLRNVLTNEVSNLRRLDIEYVEEKNGEENEHIKGQQNYKEDVLIKHDHTNTHI.

The tract at residues 120–141 (ADKPSSLNLHSHTHSHGHTHSH) is disordered. Over residues 130–141 (SHTHSHGHTHSH) the composition is skewed to basic residues. 6 helical membrane-spanning segments follow: residues 165 to 185 (WVGL…GIVF), 194 to 214 (AIHA…VGLA), 241 to 261 (LAMA…GPVI), 286 to 306 (VTDI…EWIF), 333 to 353 (LTSL…IQSL), and 356 to 376 (IGGL…MCIA).

The protein belongs to the cation diffusion facilitator (CDF) transporter (TC 2.A.4) family. SLC30A subfamily.

The protein resides in the mitochondrion membrane. In terms of biological role, mitochondrial metal transporter involved in mitochondrial iron accumulation. This Saccharomyces cerevisiae (strain ATCC 204508 / S288c) (Baker's yeast) protein is Mitochondrial metal transporter 1 (MMT1).